A 344-amino-acid polypeptide reads, in one-letter code: MVQDTSSASTSPILTRWYIDTRPLTASTAALPLLETLQPADQISVQKYYHLKDKHMSLASNLLKYLFVHRNCRIPWSSIVISRTPDPHRRPCYIPPSGSQEDSFKDGYTGINVEFNVSHQASMVAIAGTAFTPNSGGDSKLKPEVGIDITCVNERQGRNGEERSLESLRQYIDIFSEVFSTAEMANIRRLDGVSSSSLSADRLVDYGYRLFYTYWALKEAYIKMTGEALLAPWLRELEFSNVVAPAAVAESGDSAGDFGEPYTGVRTTLYKNLVEDVRIEVAALGGDYLFATAARGGGIGASSRPGGGPDGSGIRSQDPWRPFKKLDIERDIQPCATGVCNCLS.

The protein belongs to the P-Pant transferase superfamily.

It catalyses the reaction apo-[ACP] + CoA = holo-[ACP] + adenosine 3',5'-bisphosphate + H(+). Transfers the 4'-phosphopantetheine moiety from coenzyme A to a Ser of an acyl-carrier-protein. The enzyme is able to transfer the cofactor to a broad range of enzymes with acyl- or peptidyl-carrier protein domains. Required for primary biological processes such as growth and asexual/sexual development, and activates target enzymes involved in the synthesis of metabolites such as fatty acids, polyketides and nonribosomal peptides, lysine, siderophore, penicillin, sterigmatocystin, shamixantone, dehydroaustinol, and pigments. In Emericella nidulans (strain FGSC A4 / ATCC 38163 / CBS 112.46 / NRRL 194 / M139) (Aspergillus nidulans), this protein is 4'-phosphopantetheinyl transferase NpgA (npgA).